The primary structure comprises 207 residues: Large ribosomal subunit protein uL4 (207 aa).

Residues arginine 45–isoleucine 78 are disordered.

Belongs to the universal ribosomal protein uL4 family. In terms of assembly, part of the 50S ribosomal subunit.

In terms of biological role, one of the primary rRNA binding proteins, this protein initially binds near the 5'-end of the 23S rRNA. It is important during the early stages of 50S assembly. It makes multiple contacts with different domains of the 23S rRNA in the assembled 50S subunit and ribosome. Its function is as follows. Forms part of the polypeptide exit tunnel. In Lacticaseibacillus paracasei (strain ATCC 334 / BCRC 17002 / CCUG 31169 / CIP 107868 / KCTC 3260 / NRRL B-441) (Lactobacillus paracasei), this protein is Large ribosomal subunit protein uL4.